Reading from the N-terminus, the 335-residue chain is tRNA N6-adenosine threonylcarbamoyltransferase (335 aa).

The a divalent metal cation site is built by histidine 109, histidine 113, and tyrosine 130. Substrate contacts are provided by residues 130–134 (YVSGG), aspartate 162, glycine 177, glutamate 181, and asparagine 266. Aspartate 294 contacts a divalent metal cation.

The protein belongs to the KAE1 / TsaD family. In terms of assembly, component of the EKC/KEOPS complex composed of at least tp53rk, tprkb, osgep and lage3; the whole complex dimerizes. A divalent metal cation serves as cofactor.

The protein localises to the cytoplasm. It is found in the nucleus. The enzyme catalyses L-threonylcarbamoyladenylate + adenosine(37) in tRNA = N(6)-L-threonylcarbamoyladenosine(37) in tRNA + AMP + H(+). Functionally, component of the EKC/KEOPS complex that is required for the formation of a threonylcarbamoyl group on adenosine at position 37 (t(6)A37) in tRNAs that read codons beginning with adenine. The complex is probably involved in the transfer of the threonylcarbamoyl moiety of threonylcarbamoyl-AMP (TC-AMP) to the N6 group of A37. Osgep likely plays a direct catalytic role in this reaction, but requires other protein(s) of the complex to fulfill this activity. The chain is tRNA N6-adenosine threonylcarbamoyltransferase from Xenopus laevis (African clawed frog).